The chain runs to 338 residues: Flap endonuclease 1 (338 aa).

Residues 1–98 (MGVNLSSILI…ETLRERSLIK (98 aa)) form an N-domain region. Positions 27, 80, 152, 154, 173, 175, and 236 each coordinate Mg(2+). An I-domain region spans residues 116–257 (KIRSLSSRIN…TALSLIKKYN (142 aa)). An interaction with PCNA region spans residues 330–338 (HQSSLDRFF).

The protein belongs to the XPG/RAD2 endonuclease family. FEN1 subfamily. Interacts with PCNA. PCNA stimulates the nuclease activity without altering cleavage specificity. The cofactor is Mg(2+).

Its function is as follows. Structure-specific nuclease with 5'-flap endonuclease and 5'-3' exonuclease activities involved in DNA replication and repair. During DNA replication, cleaves the 5'-overhanging flap structure that is generated by displacement synthesis when DNA polymerase encounters the 5'-end of a downstream Okazaki fragment. Binds the unpaired 3'-DNA end and kinks the DNA to facilitate 5' cleavage specificity. Cleaves one nucleotide into the double-stranded DNA from the junction in flap DNA, leaving a nick for ligation. Also involved in the base excision repair (BER) pathway. Acts as a genome stabilization factor that prevents flaps from equilibrating into structures that lead to duplications and deletions. Also possesses 5'-3' exonuclease activity on nicked or gapped double-stranded DNA. The chain is Flap endonuclease 1 from Picrophilus torridus (strain ATCC 700027 / DSM 9790 / JCM 10055 / NBRC 100828 / KAW 2/3).